A 278-amino-acid chain; its full sequence is Urease accessory protein UreD (278 aa).

It belongs to the UreD family. UreD, UreF and UreG form a complex that acts as a GTP-hydrolysis-dependent molecular chaperone, activating the urease apoprotein by helping to assemble the nickel containing metallocenter of UreC. The UreE protein probably delivers the nickel.

The protein localises to the cytoplasm. Functionally, required for maturation of urease via the functional incorporation of the urease nickel metallocenter. This Pseudomonas putida (strain ATCC 700007 / DSM 6899 / JCM 31910 / BCRC 17059 / LMG 24140 / F1) protein is Urease accessory protein UreD.